Reading from the N-terminus, the 119-residue chain is Virulence protein VsdF (119 aa).

In terms of biological role, expressed but non-essential protein, involved in the virulence of Salmonellas. The protein is Virulence protein VsdF (vsdF) of Salmonella dublin.